Reading from the N-terminus, the 129-residue chain is MKTVQFCFLFCCWKAICCNSCELTNITIAIEKEECRFCISINTTWCAGYCYTRDLVYKDPARPNIQKTCTFKEVVYETVRVPGCAHHADSLYTYPVATQCHCGKCDSDSTDCTVRGLGPSYCSFSEMKE.

Residues 1-18 form the signal peptide; the sequence is MKTVQFCFLFCCWKAICC. 6 disulfides stabilise this stretch: Cys-21–Cys-69, Cys-35–Cys-84, Cys-38–Cys-122, Cys-46–Cys-100, Cys-50–Cys-102, and Cys-105–Cys-112. Residues Asn-25 and Asn-42 are each glycosylated (N-linked (GlcNAc...) asparagine).

Belongs to the glycoprotein hormones subunit beta family. As to quaternary structure, heterodimer. The active follitropin is a heterodimer composed of an alpha chain/CGA shared with other hormones and a unique beta chain/FSHB shown here.

It localises to the secreted. Together with the alpha chain CGA constitutes follitropin, the follicle-stimulating hormone, and provides its biological specificity to the hormone heterodimer. Binds FSHR, a G protein-coupled receptor, on target cells to activate downstream signaling pathways. Follitropin is involved in follicle development and spermatogenesis in reproductive organs. The protein is Follitropin subunit beta (FSHB) of Macaca fascicularis (Crab-eating macaque).